Here is a 99-residue protein sequence, read N- to C-terminus: Large ribosomal subunit protein bL27 (99 aa).

Positions 1-9 (MLIMNLQLF) are excised as a propeptide.

It belongs to the bacterial ribosomal protein bL27 family. The N-terminus is cleaved by ribosomal processing cysteine protease Prp.

This is Large ribosomal subunit protein bL27 from Clostridium botulinum (strain Eklund 17B / Type B).